The following is a 652-amino-acid chain: ATP-dependent zinc metalloprotease FtsH (652 aa).

The Cytoplasmic segment spans residues 1-11; the sequence is MKKQNNGLIKN. The chain crosses the membrane as a helical span at residues 12–32; it reads PFLWLLFIFFLVTGFQYFYSG. At 33 to 131 the chain is on the extracellular side; the sequence is NNSGGSQQIN…EVTVKHESSS (99 aa). The chain crosses the membrane as a helical span at residues 132-152; that stretch reads GIWINLLVSIVPFGILFFFLF. Residues 153–652 lie on the Cytoplasmic side of the membrane; the sequence is SMMGNMGGGN…EVKSKMNDEK (500 aa). 227-234 contacts ATP; it reads GPPGTGKT. H449 is a Zn(2+) binding site. The active site involves E450. The Zn(2+) site is built by H453 and D525. The tract at residues 628-652 is disordered; it reads MPEAVEEESHALSYDEVKSKMNDEK. Residues 634-652 show a composition bias toward basic and acidic residues; that stretch reads EESHALSYDEVKSKMNDEK.

The protein in the central section; belongs to the AAA ATPase family. This sequence in the C-terminal section; belongs to the peptidase M41 family. In terms of assembly, homohexamer. The cofactor is Zn(2+).

Its subcellular location is the cell membrane. Acts as a processive, ATP-dependent zinc metallopeptidase for both cytoplasmic and membrane proteins. Plays a role in the quality control of integral membrane proteins. The polypeptide is ATP-dependent zinc metalloprotease FtsH (Streptococcus pneumoniae (strain ATCC BAA-255 / R6)).